A 166-amino-acid chain; its full sequence is Phosphopantetheine adenylyltransferase (166 aa).

Ser9 serves as a coordination point for substrate. ATP is bound by residues 9-10 (SF) and His17. Substrate contacts are provided by Lys41, Leu74, and Lys88. ATP-binding positions include 89–91 (GLR), Glu99, and 123–129 (YIHLSST).

This sequence belongs to the bacterial CoaD family. In terms of assembly, homohexamer. Mg(2+) serves as cofactor.

The protein resides in the cytoplasm. It carries out the reaction (R)-4'-phosphopantetheine + ATP + H(+) = 3'-dephospho-CoA + diphosphate. It functions in the pathway cofactor biosynthesis; coenzyme A biosynthesis; CoA from (R)-pantothenate: step 4/5. Reversibly transfers an adenylyl group from ATP to 4'-phosphopantetheine, yielding dephospho-CoA (dPCoA) and pyrophosphate. The protein is Phosphopantetheine adenylyltransferase of Pseudarthrobacter chlorophenolicus (strain ATCC 700700 / DSM 12829 / CIP 107037 / JCM 12360 / KCTC 9906 / NCIMB 13794 / A6) (Arthrobacter chlorophenolicus).